Here is a 492-residue protein sequence, read N- to C-terminus: Anthranilate synthase component 1 (492 aa).

L-tryptophan is bound by residues Ser48 and 273–275 (PYM). 308 to 309 (GT) provides a ligand contact to chorismate. Mg(2+) is bound at residue Glu335. Chorismate contacts are provided by residues Tyr423, Arg443, 457-459 (GGG), and Gly459. Glu472 provides a ligand contact to Mg(2+).

This sequence belongs to the anthranilate synthase component I family. As to quaternary structure, heterotetramer consisting of two non-identical subunits: a beta subunit (TrpG) and a large alpha subunit (TrpE). Mg(2+) serves as cofactor.

The catalysed reaction is chorismate + L-glutamine = anthranilate + pyruvate + L-glutamate + H(+). The protein operates within amino-acid biosynthesis; L-tryptophan biosynthesis; L-tryptophan from chorismate: step 1/5. Feedback inhibited by tryptophan. Functionally, part of a heterotetrameric complex that catalyzes the two-step biosynthesis of anthranilate, an intermediate in the biosynthesis of L-tryptophan. In the first step, the glutamine-binding beta subunit (TrpG) of anthranilate synthase (AS) provides the glutamine amidotransferase activity which generates ammonia as a substrate that, along with chorismate, is used in the second step, catalyzed by the large alpha subunit of AS (TrpE) to produce anthranilate. In the absence of TrpG, TrpE can synthesize anthranilate directly from chorismate and high concentrations of ammonia. The chain is Anthranilate synthase component 1 from Pseudomonas aeruginosa (strain ATCC 15692 / DSM 22644 / CIP 104116 / JCM 14847 / LMG 12228 / 1C / PRS 101 / PAO1).